Reading from the N-terminus, the 324-residue chain is Acetyl-coenzyme A carboxylase carboxyl transferase subunit alpha (324 aa).

Residues 37–291 enclose the CoA carboxyltransferase C-terminal domain; it reads ILEDKLENLE…DLMIRKTFEQ (255 aa).

The protein belongs to the AccA family. In terms of assembly, acetyl-CoA carboxylase is a heterohexamer composed of biotin carboxyl carrier protein (AccB), biotin carboxylase (AccC) and two subunits each of ACCase subunit alpha (AccA) and ACCase subunit beta (AccD).

It is found in the cytoplasm. The catalysed reaction is N(6)-carboxybiotinyl-L-lysyl-[protein] + acetyl-CoA = N(6)-biotinyl-L-lysyl-[protein] + malonyl-CoA. It participates in lipid metabolism; malonyl-CoA biosynthesis; malonyl-CoA from acetyl-CoA: step 1/1. In terms of biological role, component of the acetyl coenzyme A carboxylase (ACC) complex. First, biotin carboxylase catalyzes the carboxylation of biotin on its carrier protein (BCCP) and then the CO(2) group is transferred by the carboxyltransferase to acetyl-CoA to form malonyl-CoA. The polypeptide is Acetyl-coenzyme A carboxylase carboxyl transferase subunit alpha (Bacillus cereus (strain G9842)).